We begin with the raw amino-acid sequence, 164 residues long: FMN reductase (NADH) RutF (164 aa).

This sequence belongs to the non-flavoprotein flavin reductase family. RutF subfamily.

The enzyme catalyses FMNH2 + NAD(+) = FMN + NADH + 2 H(+). In terms of biological role, catalyzes the reduction of FMN to FMNH2 which is used to reduce pyrimidine by RutA via the Rut pathway. The chain is FMN reductase (NADH) RutF from Klebsiella pneumoniae subsp. pneumoniae (strain ATCC 700721 / MGH 78578).